The chain runs to 177 residues: ATP synthase subunit delta (177 aa).

Belongs to the ATPase delta chain family. F-type ATPases have 2 components, F(1) - the catalytic core - and F(0) - the membrane proton channel. F(1) has five subunits: alpha(3), beta(3), gamma(1), delta(1), epsilon(1). F(0) has three main subunits: a(1), b(2) and c(10-14). The alpha and beta chains form an alternating ring which encloses part of the gamma chain. F(1) is attached to F(0) by a central stalk formed by the gamma and epsilon chains, while a peripheral stalk is formed by the delta and b chains.

Its subcellular location is the cell inner membrane. Its function is as follows. F(1)F(0) ATP synthase produces ATP from ADP in the presence of a proton or sodium gradient. F-type ATPases consist of two structural domains, F(1) containing the extramembraneous catalytic core and F(0) containing the membrane proton channel, linked together by a central stalk and a peripheral stalk. During catalysis, ATP synthesis in the catalytic domain of F(1) is coupled via a rotary mechanism of the central stalk subunits to proton translocation. In terms of biological role, this protein is part of the stalk that links CF(0) to CF(1). It either transmits conformational changes from CF(0) to CF(1) or is implicated in proton conduction. This chain is ATP synthase subunit delta, found in Sulfurimonas denitrificans (strain ATCC 33889 / DSM 1251) (Thiomicrospira denitrificans (strain ATCC 33889 / DSM 1251)).